The following is a 148-amino-acid chain: 3-hydroxyacyl-[acyl-carrier-protein] dehydratase FabZ (148 aa).

His-55 is an active-site residue.

This sequence belongs to the thioester dehydratase family. FabZ subfamily.

It is found in the cytoplasm. The enzyme catalyses a (3R)-hydroxyacyl-[ACP] = a (2E)-enoyl-[ACP] + H2O. In terms of biological role, involved in unsaturated fatty acids biosynthesis. Catalyzes the dehydration of short chain beta-hydroxyacyl-ACPs and long chain saturated and unsaturated beta-hydroxyacyl-ACPs. In Haemophilus influenzae (strain ATCC 51907 / DSM 11121 / KW20 / Rd), this protein is 3-hydroxyacyl-[acyl-carrier-protein] dehydratase FabZ.